The primary structure comprises 337 residues: Probable RuBisCO transcriptional regulator (337 aa).

Residues 6–63 form the HTH lysR-type domain; sequence FTLDQLRILKAIAVEGSFKRAADSLYVSQPAVSLQVQNLERQLDVPLFDRGGRRAQLT. Residues 23-42 constitute a DNA-binding region (H-T-H motif); sequence FKRAADSLYVSQPAVSLQVQ.

Belongs to the LysR transcriptional regulatory family.

Functionally, trans-acting transcriptional regulator of RuBisCO genes (rbcL and rbcS) expression. In Trichormus variabilis (strain ATCC 29413 / PCC 7937) (Anabaena variabilis), this protein is Probable RuBisCO transcriptional regulator (rbcR).